A 307-amino-acid polypeptide reads, in one-letter code: uncharacterized protein (307 aa).

One can recognise an HTH lysR-type domain in the interval 11–68 (IRLRHLHTFVAVAQQGTLGRAAETLNLSQPALSKTLNELEQLTGARLFERGRQGAQLT). The H-T-H motif DNA-binding region spans 28–47 (LGRAAETLNLSQPALSKTLN).

It belongs to the LysR transcriptional regulatory family.

This is an uncharacterized protein from Escherichia coli (strain K12).